Here is a 358-residue protein sequence, read N- to C-terminus: MAGFQSSEVDPNTKNKNAEEMFNELNKVPFFMQSLEDVGDESENNVQLDALKALAYEGEPHEVAQNFREHGNECFASKRYKDAEEFYTKALAQKCGDKDIEIACYSNRAACNLLFENYRQVLNDCAQVLQRDSTHAKAYYRSAKALVALKRYDEAKECIRLCSLVHPNDPAILALSKELQKKSDDFEKRESEKKRVAQEKVIAAKTVLLALQERHIKTKTTEHPPDLGDAMISLSTFDDPKSELFFPTILLYPLVYQSDFVPSVSENCTPLELLKTVFQSPAPWDVHQLYNPDSLDVFATTDTLGLIKVGKNVPILKALTHPKVTLIDGLVQLHVVPHHLASDWISSWKKNKQENAKN.

TPR repeat units follow at residues A64–D97, I102–H135, A136–D169, and T221–V255.

It belongs to the TTC4 family. Monomer. Component of Hsp70 and Hsp90 chaperone complexes.

Its subcellular location is the cytoplasm. It localises to the nucleus. Functionally, co-chaperone that binds to the molecular chaperones Hsp90 and Hsp70. Stimulates Hsp70 ATPase activity, but not Hsp90 ATPase activity. Involved in only a subset of Hsp90 functions. The polypeptide is Hsp70/Hsp90 co-chaperone cns1 (cns1) (Schizosaccharomyces pombe (strain 972 / ATCC 24843) (Fission yeast)).